Here is a 286-residue protein sequence, read N- to C-terminus: Glucose import system permease protein GlcT (286 aa).

Transmembrane regions (helical) follow at residues 6–26 (TIIL…LVIW), 71–91 (VILV…LYFL), 103–123 (IVIY…LWLF), 154–174 (LVLV…LAGF), 199–219 (ILIP…FLFS), and 260–280 (VATM…LTVI). The ABC transmembrane type-1 domain maps to 63-275 (LLHSIELSVI…LIATIIIIPY (213 aa)).

The protein belongs to the binding-protein-dependent transport system permease family. As to quaternary structure, the complex is composed of two ATP-binding proteins (GlcV), two transmembrane proteins (GlcT and GlcU) and a solute-binding protein (GlcS).

The protein resides in the cell membrane. Part of the ABC transporter complex GlcSTUV involved in glucose uptake. Responsible for the translocation of the substrate across the membrane. This Saccharolobus solfataricus (strain ATCC 35092 / DSM 1617 / JCM 11322 / P2) (Sulfolobus solfataricus) protein is Glucose import system permease protein GlcT.